The chain runs to 113 residues: Protein CTLA-2-beta (113 aa).

A run of 2 repeats spans residues Glu-15–Lys-17 and Glu-18–Lys-20. Residues Glu-15–Lys-20 form a 2 X 3 AA tandem repeats of E-W-K region.

It to the propeptide regions of cysteine proteases.

Its function is as follows. Not known, expressed in activated T-cell. The chain is Protein CTLA-2-beta (Ctla2b) from Mus musculus (Mouse).